The chain runs to 500 residues: 7-alpha-hydroxycholest-4-en-3-one 12-alpha-hydroxylase (500 aa).

A helical membrane pass occupies residues 4–24 (WCTVLGALLTVVGCLCLSLLL). A Phosphoserine modification is found at Ser325. Cys439 provides a ligand contact to heme.

It belongs to the cytochrome P450 family. It depends on heme as a cofactor. As to expression, expressed in liver.

The protein localises to the endoplasmic reticulum membrane. The protein resides in the microsome membrane. It carries out the reaction 7alpha-hydroxycholest-4-en-3-one + reduced [NADPH--hemoprotein reductase] + O2 = 7alpha,12alpha-dihydroxycholest-4-en-3-one + oxidized [NADPH--hemoprotein reductase] + H2O + H(+). The catalysed reaction is 5beta-cholestane-3alpha,7alpha-diol + reduced [NADPH--hemoprotein reductase] + O2 = 5beta-cholestane-3alpha,7alpha,12alpha-triol + oxidized [NADPH--hemoprotein reductase] + H2O + H(+). The enzyme catalyses chenodeoxycholate + reduced [NADPH--hemoprotein reductase] + O2 = cholate + oxidized [NADPH--hemoprotein reductase] + H2O + H(+). It functions in the pathway lipid metabolism; bile acid biosynthesis. Functionally, a cytochrome P450 monooxygenase involved in primary bile acid biosynthesis. Catalyzes the 12alpha-hydroxylation of 7alpha-hydroxy-4-cholesten-3-one, an intermediate metabolite in cholic acid biosynthesis. Controls biliary balance of cholic acid and chenodeoxycholic acid, ultimately regulating the intestinal absorption of dietary lipids. Mechanistically, uses molecular oxygen inserting one oxygen atom into a substrate, and reducing the second into a water molecule, with two electrons provided by NADPH via cytochrome P450 reductase (CPR; NADPH--hemoprotein reductase). This is 7-alpha-hydroxycholest-4-en-3-one 12-alpha-hydroxylase (Cyp8b1) from Mus musculus (Mouse).